A 261-amino-acid polypeptide reads, in one-letter code: Proteasome assembly chaperone 2 (261 aa).

Belongs to the PSMG2 family. Forms a heterodimer with psmg1. Post-translationally, degraded by the proteasome upon completion of 20S proteasome maturation.

The protein resides in the nucleus. Functionally, chaperone protein which promotes assembly of the 20S proteasome as part of a heterodimer with psmg1. The protein is Proteasome assembly chaperone 2 of Xenopus tropicalis (Western clawed frog).